The following is a 442-amino-acid chain: D-serine dehydratase (442 aa).

N6-(pyridoxal phosphate)lysine is present on Lys118.

Belongs to the serine/threonine dehydratase family. DsdA subfamily. In terms of assembly, monomer. The cofactor is pyridoxal 5'-phosphate.

It carries out the reaction D-serine = pyruvate + NH4(+). The polypeptide is D-serine dehydratase (Escherichia coli (strain K12 / MC4100 / BW2952)).